The chain runs to 310 residues: Alpha/beta hydrolase domain-containing protein 17A (310 aa).

Residues Ser190, Asp255, and His284 each act as charge relay system in the active site. Ser307 is subject to Phosphoserine.

It belongs to the AB hydrolase superfamily. ABHD17 family. Palmitoylated on cysteine residues located in a cysteine cluster at the N-terminus which promotes membrane localization. Palmitoylation is required for post-synaptic localization and for depalmitoylating activity towards DLG4/PSD95.

The protein resides in the cell membrane. It is found in the endosome membrane. Its subcellular location is the cell projection. The protein localises to the dendritic spine. It localises to the postsynaptic density membrane. It carries out the reaction S-hexadecanoyl-L-cysteinyl-[protein] + H2O = L-cysteinyl-[protein] + hexadecanoate + H(+). With respect to regulation, inhibited by palmostatin-B. In terms of biological role, hydrolyzes fatty acids from S-acylated cysteine residues in proteins. Has depalmitoylating activity towards NRAS. Has depalmitoylating activity towards DLG4/PSD95. May have depalmitoylating activity towards MAP6. The polypeptide is Alpha/beta hydrolase domain-containing protein 17A (Homo sapiens (Human)).